Reading from the N-terminus, the 471-residue chain is Cysteine--tRNA ligase (471 aa).

Cys29 is a Zn(2+) binding site. The short motif at 31 to 41 (PTVYNYIHIGN) is the 'HIGH' region element. The Zn(2+) site is built by Cys209, His234, and Glu238. The short motif at 266-270 (KMSKS) is the 'KMSKS' region element. Lys269 contributes to the ATP binding site.

The protein belongs to the class-I aminoacyl-tRNA synthetase family. Monomer. The cofactor is Zn(2+).

The protein localises to the cytoplasm. It carries out the reaction tRNA(Cys) + L-cysteine + ATP = L-cysteinyl-tRNA(Cys) + AMP + diphosphate. This chain is Cysteine--tRNA ligase, found in Listeria monocytogenes serotype 4b (strain CLIP80459).